We begin with the raw amino-acid sequence, 38 residues long: Large ribosomal subunit protein bL36 (38 aa).

Belongs to the bacterial ribosomal protein bL36 family.

The sequence is that of Large ribosomal subunit protein bL36 from Aster yellows witches'-broom phytoplasma (strain AYWB).